A 368-amino-acid chain; its full sequence is G-protein coupled receptor 62 (368 aa).

Over 1-18 the chain is Extracellular; that stretch reads MANSTGLNASEVAGSLGL. N-linked (GlcNAc...) asparagine glycans are attached at residues asparagine 3 and asparagine 8. A helical membrane pass occupies residues 19-39; it reads ILAAVVEVGALLGNGALLVVV. The Cytoplasmic segment spans residues 40–53; the sequence is LRTPGLRDALYLAH. A helical membrane pass occupies residues 54-74; that stretch reads LCVVDLLAAASIMPLGLLAAP. Over 75-91 the chain is Extracellular; it reads PPGLGRVRLGPAPCRAA. Residues 92 to 112 form a helical membrane-spanning segment; sequence RFLSAALLPACTLGVAALGLA. The Cytoplasmic portion of the chain corresponds to 113–129; the sequence is RYRLIVHPLRPGSRPPP. The helical transmembrane segment at 130-150 threads the bilayer; sequence VLVLTAVWAAAGLLGALSLLG. Over 151 to 177 the chain is Extracellular; it reads TPPAPPPAPARCSVLAGGLGPFRPLWA. The helical transmembrane segment at 178–198 threads the bilayer; that stretch reads LLAFALPALLLLGAYGGIFVV. The Cytoplasmic portion of the chain corresponds to 199 to 239; the sequence is ARRAALRPPRPARGSRLHSDSLDSRLSILPPLRPRLPGGKA. A helical transmembrane segment spans residues 240 to 260; that stretch reads ALAPALAVGQFAACWLPYGCA. The Extracellular segment spans residues 261 to 272; the sequence is CLAPAARAAEAE. A helical membrane pass occupies residues 273–293; sequence AAVTWVAYSAFAAHPFLYGLL. Topologically, residues 294–368 are cytoplasmic; it reads QRPVRLALGR…YQGPPESSLS (75 aa). Residues 332-368 are disordered; that stretch reads RPPEGPAVGPSEAPEQTPELAGGRSPAYQGPPESSLS.

Belongs to the G-protein coupled receptor 1 family. As to quaternary structure, homodimers. Forms heterodimer with MTNR1B. Interacts with ARRB1 and ARRB2 in a spontaneous and agonist-independent manner; leading to the internalization of GPR62 in the endosomal compartment. Expressed in brain; detected in the basal forebrain, frontal cortex, caudate, putamen, thalamus and hippocampus.

The protein resides in the cell membrane. Its subcellular location is the endosome membrane. Orphan G-protein coupled receptor. Constitutively activates the G(q/11)/inositol phosphate and the G(s)-alpha/cAMP signaling pathways. Has spontaneous activity for beta-arrestin recruitment. Shows a reciprocal modulation of signaling functions with the melatonin receptor MTNR1B most likely through receptor heteromerization. This chain is G-protein coupled receptor 62 (GPR62), found in Homo sapiens (Human).